Here is a 472-residue protein sequence, read N- to C-terminus: Endoplasmic reticulum oxidoreductin-2 (472 aa).

The first 37 residues, 1 to 37 (MAETDVGSVKGKEKGSGKRWILLIGAIAAVLLAVVVA), serve as a signal peptide directing secretion. N-linked (GlcNAc...) asparagine glycosylation is present at asparagine 44. Intrachain disulfides connect cysteine 55–cysteine 74, cysteine 57–cysteine 72, cysteine 111–cysteine 371, cysteine 120–cysteine 125, cysteine 221–cysteine 230, and cysteine 374–cysteine 377. FAD-binding residues include arginine 200, threonine 202, and tryptophan 213. FAD-binding residues include serine 241 and histidine 244. An N-linked (GlcNAc...) asparagine glycan is attached at asparagine 267. FAD is bound by residues arginine 274 and arginine 281. An N-linked (GlcNAc...) asparagine glycan is attached at asparagine 364.

The protein belongs to the EROs family. In terms of assembly, may function both as a monomer and a homodimer. The cofactor is FAD. Post-translationally, N-glycosylated.

It localises to the endoplasmic reticulum membrane. Functionally, essential oxidoreductase that oxidizes proteins in the endoplasmic reticulum to produce disulfide bonds. Acts by oxidizing directly PDI isomerase through a direct disulfide exchange. Does not act as a direct oxidant of folding substrate, but relies on PDI to transfer oxidizing equivalent. Does not oxidize all PDI related proteins, suggesting that it can discriminate between PDI and related proteins. Its reoxidation probably involves electron transfer to molecular oxygen via FAD. Acts independently of glutathione. May be responsible for a significant proportion of reactive oxygen species (ROS) in the cell, thereby being a source of oxidative stress. The polypeptide is Endoplasmic reticulum oxidoreductin-2 (AERO2) (Arabidopsis thaliana (Mouse-ear cress)).